The chain runs to 248 residues: Tropomyosin alpha-4 chain (248 aa).

The residue at position 2 (A2) is an N-acetylalanine. Residues 2-248 (AGLNSLEAVK…DQTLDELNCI (247 aa)) are a coiled coil. A Phosphoserine modification is found at S6. The tract at residues 16 to 47 (ALQQQADEAEDRAQGLQRELDGERERREKAEG) is disordered. Residues 33 to 47 (RELDGERERREKAEG) are compositionally biased toward basic and acidic residues. K177 and K215 each carry N6-acetyllysine. T216 is subject to Phosphothreonine.

It belongs to the tropomyosin family. Homodimer. Heterodimer of an alpha (TPM1, TPM3 or TPM4) and a beta (TPM2) chain.

It localises to the cytoplasm. The protein localises to the cytoskeleton. In terms of biological role, binds to actin filaments in muscle and non-muscle cells. Plays a central role, in association with the troponin complex, in the calcium dependent regulation of vertebrate striated muscle contraction. Smooth muscle contraction is regulated by interaction with caldesmon. In non-muscle cells is implicated in stabilizing cytoskeleton actin filaments. Binds calcium. The protein is Tropomyosin alpha-4 chain (TPM4) of Equus caballus (Horse).